The primary structure comprises 621 residues: Chaperone protein HtpG (621 aa).

Residues 1-341 (MSNQEYTFQT…SEDLPLNVSR (341 aa)) form an a; substrate-binding region. The interval 342-547 (EILQQNKILA…GDEQNAMMAN (206 aa)) is b. The segment at 548–621 (LMRQMGQNMP…RLNSVLLKAL (74 aa)) is c.

The protein belongs to the heat shock protein 90 family. In terms of assembly, homodimer.

It is found in the cytoplasm. Molecular chaperone. Has ATPase activity. The polypeptide is Chaperone protein HtpG (Helicobacter acinonychis (strain Sheeba)).